Here is a 517-residue protein sequence, read N- to C-terminus: ATP synthase subunit alpha (517 aa).

174 to 181 is a binding site for ATP; that stretch reads GDRQTGKT.

The protein belongs to the ATPase alpha/beta chains family. In terms of assembly, F-type ATPases have 2 components, CF(1) - the catalytic core - and CF(0) - the membrane proton channel. CF(1) has five subunits: alpha(3), beta(3), gamma(1), delta(1), epsilon(1). CF(0) has three main subunits: a(1), b(2) and c(9-12). The alpha and beta chains form an alternating ring which encloses part of the gamma chain. CF(1) is attached to CF(0) by a central stalk formed by the gamma and epsilon chains, while a peripheral stalk is formed by the delta and b chains.

The protein resides in the cell inner membrane. It catalyses the reaction ATP + H2O + 4 H(+)(in) = ADP + phosphate + 5 H(+)(out). Produces ATP from ADP in the presence of a proton gradient across the membrane. The alpha chain is a regulatory subunit. The chain is ATP synthase subunit alpha from Variovorax paradoxus (strain S110).